Here is a 436-residue protein sequence, read N- to C-terminus: Alpha-2 adrenergic receptor (436 aa).

Residues 1-27 (MDVTQSNATKDDANITVTPWPYTETAA) are Extracellular-facing. N-linked (GlcNAc...) asparagine glycosylation is found at Asn-7 and Asn-14. The chain crosses the membrane as a helical span at residues 28–52 (AFIILVVSVIILVSIVGNVLVIVAV). Over 53 to 64 (LTSRALRAPQNL) the chain is Cytoplasmic. A helical transmembrane segment spans residues 65 to 90 (FLVSLACADILVATLVIPFSLANEIM). The Extracellular portion of the chain corresponds to 91-100 (GYWFFGSTWC). The cysteines at positions 100 and 173 are disulfide-linked. The chain crosses the membrane as a helical span at residues 101–123 (AFYLALDVLFCTSSIVHLCAISL). The Cytoplasmic portion of the chain corresponds to 124-144 (DRYWSVTKAVSYNLKRTPKRI). The chain crosses the membrane as a helical span at residues 145–167 (KSMIAVVWVISAVISFPPLIMTK). The Extracellular portion of the chain corresponds to 168 to 178 (HDEKECLINDE). The chain crosses the membrane as a helical span at residues 179–202 (TWYILSSSLVSFFAPGFIMITVYC). Over 203 to 329 (KIYRVAKQRS…QMREKRFTFV (127 aa)) the chain is Cytoplasmic. The disordered stretch occupies residues 238–280 (KFEKESPSSNSSESNQRQEELDDIDLEESATSDNKPKSSRFSN). Acidic residues predominate over residues 257 to 267 (ELDDIDLEESA). The chain crosses the membrane as a helical span at residues 330-353 (LTVVMGVFVLCWFPFFFTYSLHAI). The Extracellular portion of the chain corresponds to 354-366 (CGDSCEPPEALFK). The helical transmembrane segment at 367–387 (LFFWIGYCNSSVNPIIYTIFN) threads the bilayer. At 388–436 (RDFRKAFKKICLLDCAAHLRDSCLGTLGRLNAKCIFECHQKSNQEETAN) the chain is on the cytoplasmic side.

This sequence belongs to the G-protein coupled receptor 1 family.

The protein localises to the cell membrane. Its function is as follows. Alpha-2 adrenergic receptors mediate the catecholamine-induced inhibition of adenylate cyclase through the action of G proteins. This Carassius auratus (Goldfish) protein is Alpha-2 adrenergic receptor.